The chain runs to 346 residues: Phenylalanine--tRNA ligase alpha subunit (346 aa).

Glu-261 contributes to the Mg(2+) binding site.

The protein belongs to the class-II aminoacyl-tRNA synthetase family. Phe-tRNA synthetase alpha subunit type 1 subfamily. Tetramer of two alpha and two beta subunits. Requires Mg(2+) as cofactor.

Its subcellular location is the cytoplasm. The enzyme catalyses tRNA(Phe) + L-phenylalanine + ATP = L-phenylalanyl-tRNA(Phe) + AMP + diphosphate + H(+). This Streptococcus agalactiae serotype III (strain NEM316) protein is Phenylalanine--tRNA ligase alpha subunit.